The sequence spans 234 residues: Chalcone--flavanone isomerase 1 (234 aa).

Substrate is bound by residues T50, N115, and S192.

It belongs to the chalcone isomerase family.

The enzyme catalyses a chalcone = a flavanone.. Its pathway is secondary metabolite biosynthesis; flavonoid biosynthesis. Catalyzes the intramolecular cyclization of bicyclic chalcones into tricyclic (S)-flavanones. Responsible for the isomerization of 4,2',4',6'-tetrahydroxychalcone (also termed chalcone) into naringenin. The polypeptide is Chalcone--flavanone isomerase 1 (CHI1) (Vitis vinifera (Grape)).